A 442-amino-acid polypeptide reads, in one-letter code: MENAKMNSLIAQYPLVKDLVALKETTWFNPGTTSLAEGLPYVGLTEQDVQDAHARLSRFAPYLAKAFPETAATGGIIESELVAIPAMQKRLEKEYQQPISGQLLLKKDSHLPISGSIKARGGIYEVLAHAEKLALEAGLLTLEDDYSKLLSPEFKQFFSQYSIAVGSTGNLGLSIGIMSARIGFKVTVHMSADARAWKKAKLRSHGVTVVEYEQDYGVAVEEGRKAAQSDPNCFFIDDENSRTLFLGYSVAGQRLKAQFAEQGRIVDADNPLFVYLPCGVGGGPGGVAFGLKLAFGDHVHCFFAEPTHSPCMLLGVHTGLHDQISVQDIGIDNLTAADGLAVGRASGFVGRAMERLLDGFYTLSDQTMYDMLGWLAQEEGIRLEPSALAGMAGPQRVCASVSYQQMHGFSAEQLRNATHLVWATGGGMVPEEEMEQYLAKGR.

N6-(pyridoxal phosphate)lysine is present on K118.

The protein belongs to the serine/threonine dehydratase family. DsdA subfamily. As to quaternary structure, monomer. Pyridoxal 5'-phosphate is required as a cofactor.

It catalyses the reaction D-serine = pyruvate + NH4(+). This Escherichia coli O157:H7 protein is D-serine dehydratase.